We begin with the raw amino-acid sequence, 410 residues long: Peptidase T (410 aa).

Histidine 79 lines the Zn(2+) pocket. The active site involves aspartate 81. Aspartate 142 contacts Zn(2+). Glutamate 176 (proton acceptor) is an active-site residue. 3 residues coordinate Zn(2+): glutamate 177, aspartate 199, and histidine 381.

Belongs to the peptidase M20B family. The cofactor is Zn(2+).

Its subcellular location is the cytoplasm. It catalyses the reaction Release of the N-terminal residue from a tripeptide.. In terms of biological role, cleaves the N-terminal amino acid of tripeptides. This chain is Peptidase T, found in Bacillus cereus (strain ATCC 10987 / NRS 248).